The sequence spans 203 residues: MSEHSNPELPPLPYDYDALEPHISEQVLTWHHDTHHQGYVNGLESAEETLAENRDAGDFGSSAAAMGNVTHNGCGHYLHTLFWENMDPNGGGEPEGELLDRIEEDFGSYEGWKGEFEAAASAAGGWALLVYDPVAKQLRNVPVDKHDQGALWGSHPILALDVWEHSYYYDYGPARGDFIDAFFEVVDWDKAAEEYEKSVSHFE.

Mn(2+)-binding residues include His31, His79, Asp161, and His165.

This sequence belongs to the iron/manganese superoxide dismutase family. The cofactor is Mn(2+).

It carries out the reaction 2 superoxide + 2 H(+) = H2O2 + O2. In terms of biological role, destroys superoxide anion radicals which are normally produced within the cells and which are toxic to biological systems. The protein is Superoxide dismutase [Mn] (sod) of Haloarcula marismortui (strain ATCC 43049 / DSM 3752 / JCM 8966 / VKM B-1809) (Halobacterium marismortui).